Here is a 72-residue protein sequence, read N- to C-terminus: Probable movement protein p8 (72 aa).

The interval 16 to 58 (GRARSVEGKKHNGSGLTGVKRHAVSETSQKSQQGTGNGTMTNI) is disordered. Positions 40–58 (SETSQKSQQGTGNGTMTNI) are enriched in polar residues.

It belongs to the carmovirus/necrovirus/panicovirus movement protein p8 family.

Functionally, cell-to-cell movement. This chain is Probable movement protein p8, found in Tobacco necrosis virus (strain A) (TNV-A).